Here is a 374-residue protein sequence, read N- to C-terminus: uncharacterized protein (374 aa).

An N-terminal signal peptide occupies residues 1-26 (MNNLIKAYAAGVMSAAFLFGSEGRVR).

This is an uncharacterized protein from Treponema pallidum (strain Nichols).